The sequence spans 441 residues: Histidinol dehydrogenase (441 aa).

Tyr-136, Gln-197, and Asn-220 together coordinate NAD(+). Residues Ser-243, Gln-265, and His-268 each coordinate substrate. Positions 265 and 268 each coordinate Zn(2+). Catalysis depends on proton acceptor residues Glu-333 and His-334. Positions 334, 367, 421, and 426 each coordinate substrate. Zn(2+) is bound at residue Asp-367. Zn(2+) is bound at residue His-426.

It belongs to the histidinol dehydrogenase family. Zn(2+) serves as cofactor.

The catalysed reaction is L-histidinol + 2 NAD(+) + H2O = L-histidine + 2 NADH + 3 H(+). The protein operates within amino-acid biosynthesis; L-histidine biosynthesis; L-histidine from 5-phospho-alpha-D-ribose 1-diphosphate: step 9/9. Functionally, catalyzes the sequential NAD-dependent oxidations of L-histidinol to L-histidinaldehyde and then to L-histidine. This chain is Histidinol dehydrogenase, found in Pseudomonas putida (strain ATCC 47054 / DSM 6125 / CFBP 8728 / NCIMB 11950 / KT2440).